The sequence spans 372 residues: 4-hydroxy-3-methylbut-2-en-1-yl diphosphate synthase (flavodoxin) (372 aa).

Positions 270, 273, 305, and 312 each coordinate [4Fe-4S] cluster.

Belongs to the IspG family. It depends on [4Fe-4S] cluster as a cofactor.

The enzyme catalyses (2E)-4-hydroxy-3-methylbut-2-enyl diphosphate + oxidized [flavodoxin] + H2O + 2 H(+) = 2-C-methyl-D-erythritol 2,4-cyclic diphosphate + reduced [flavodoxin]. It functions in the pathway isoprenoid biosynthesis; isopentenyl diphosphate biosynthesis via DXP pathway; isopentenyl diphosphate from 1-deoxy-D-xylulose 5-phosphate: step 5/6. Its function is as follows. Converts 2C-methyl-D-erythritol 2,4-cyclodiphosphate (ME-2,4cPP) into 1-hydroxy-2-methyl-2-(E)-butenyl 4-diphosphate. The sequence is that of 4-hydroxy-3-methylbut-2-en-1-yl diphosphate synthase (flavodoxin) from Enterobacter sp. (strain 638).